The following is a 403-amino-acid chain: MIHQPPAGARDLLPLEVVQKAWINDTLQQVFGQWGYQRIVTSTIERLDTLKAGGAIEDETVIQLHNNSREQLGLRPELTASVARAAVTRMANTSYPQRLCYRANVFRNPPSGHHGRQLEFYQAGVELLFSGGTLADAEILLLVAECLQKLQIPSWYLILGDAGLTRSLLSPFPEALRQEVRHCLATLDYVKLDNLSYPNEELKHRASLLFNLRGKPEDVLSKVVDLTLDQTGKHCLNNLKSLIELVNHSTSYKLPLTLDLSLIQTFDYYTGIIFKAIGQTNHKLQNLGQGGRYDQLLGVYHPQKKSAPGIGFSLNVGALHRCLLSTDILPQKPLLIDYLVVAKTSESQIEALKYAQQLRKDDNSLRVTIDLENRNEEEIKKYAQENGIKTIVWIEKGKEAIIN.

The protein belongs to the class-II aminoacyl-tRNA synthetase family. HisZ subfamily. As to quaternary structure, heteromultimer composed of HisG and HisZ subunits.

The protein localises to the cytoplasm. It participates in amino-acid biosynthesis; L-histidine biosynthesis; L-histidine from 5-phospho-alpha-D-ribose 1-diphosphate: step 1/9. Required for the first step of histidine biosynthesis. May allow the feedback regulation of ATP phosphoribosyltransferase activity by histidine. This Crocosphaera subtropica (strain ATCC 51142 / BH68) (Cyanothece sp. (strain ATCC 51142)) protein is ATP phosphoribosyltransferase regulatory subunit.